Here is a 287-residue protein sequence, read N- to C-terminus: Nucleotide-binding protein MXAN_6564 (287 aa).

13–20 (GMSGSGKS) provides a ligand contact to ATP. 62-65 (DVRE) provides a ligand contact to GTP.

This sequence belongs to the RapZ-like family.

Displays ATPase and GTPase activities. This chain is Nucleotide-binding protein MXAN_6564, found in Myxococcus xanthus (strain DK1622).